Reading from the N-terminus, the 210-residue chain is 3-phospho-D-glycerate guanylyltransferase (210 aa).

The protein belongs to the CofC family.

The catalysed reaction is (2R)-3-phosphoglycerate + GTP + H(+) = 3-[(R)-glyceryl]-diphospho-5'-guanosine + diphosphate. It participates in cofactor biosynthesis; coenzyme F420 biosynthesis. Guanylyltransferase that catalyzes the activation of (2R)-3-phosphoglycerate (3PG) as 3-[(R)-glyceryl]-diphospho-5'-guanosine, via the condensation of 3PG with GTP. It is involved in the biosynthesis of a derivative of the hydride carrier cofactor coenzyme F420, 3PG-F420. The chain is 3-phospho-D-glycerate guanylyltransferase from Colwellia psychrerythraea (strain 34H / ATCC BAA-681) (Vibrio psychroerythus).